Reading from the N-terminus, the 325-residue chain is Ribosomal RNA small subunit methyltransferase H (325 aa).

S-adenosyl-L-methionine contacts are provided by residues 45–47, D65, Y92, D113, and Q120; that span reads GGH.

The protein belongs to the methyltransferase superfamily. RsmH family.

Its subcellular location is the cytoplasm. It catalyses the reaction cytidine(1402) in 16S rRNA + S-adenosyl-L-methionine = N(4)-methylcytidine(1402) in 16S rRNA + S-adenosyl-L-homocysteine + H(+). Functionally, specifically methylates the N4 position of cytidine in position 1402 (C1402) of 16S rRNA. This chain is Ribosomal RNA small subunit methyltransferase H, found in Oleidesulfovibrio alaskensis (strain ATCC BAA-1058 / DSM 17464 / G20) (Desulfovibrio alaskensis).